The chain runs to 171 residues: Photosystem I assembly protein Ycf3 (171 aa).

TPR repeat units lie at residues 33-66, 70-103, and 118-151; these read AFSY…EEDP, SYIL…NSRL, and GTKS…APNN.

The protein belongs to the Ycf3 family.

It localises to the plastid. Its subcellular location is the chloroplast thylakoid membrane. In terms of biological role, essential for the assembly of the photosystem I (PSI) complex. May act as a chaperone-like factor to guide the assembly of the PSI subunits. In Emiliania huxleyi (Coccolithophore), this protein is Photosystem I assembly protein Ycf3.